The chain runs to 395 residues: MGIKQLYQVISENAPDAIKAGDIKNHFGRKVAIDASMSIYSFLIAVRSEGQQLMSDTGETTSHLMGMFYRTLRMVDNGIKPLYVFDGAPPKLKSGELAKRFARKSEATEAHEEAKETGTAEDVEKFSRRTVRVTREHNAECKKLLKLMGIPYIDAPTEAEAQCAVLARAGKVYAAASEDMDTLCFETPILLRHLTFSEQRKEPIQEIHLNRALEGLGMDRKQFIDLCILLGCDYLEPIPKVGPNTALKLIRDHGSLEKVLEFMENDPKKKFVVPEDWPYEDARELFLNPDVRDANDPECDFKWEAPDVPGLVDFLVKDKGFNEDRVKNGAARLQKNLKSAQQSRLEGFFKPVARTDEEKASLKRKHDEKIQEQKKKKKEEAKAKKEAKSRPRGAG.

The segment at 1-104 is N-domain; sequence MGIKQLYQVI…GELAKRFARK (104 aa). Residue D34 participates in Mg(2+) binding. 2 residues coordinate DNA: R47 and R70. 5 residues coordinate Mg(2+): D86, E158, E160, D179, and D181. Positions 122 to 253 are I-domain; that stretch reads DVEKFSRRTV…NTALKLIRDH (132 aa). E158 contributes to the DNA binding site. DNA is bound by residues G231 and D233. D233 contacts Mg(2+). The segment at 341–349 is interaction with PCNA; that stretch reads QQSRLEGFF. The tract at residues 344 to 395 is disordered; sequence RLEGFFKPVARTDEEKASLKRKHDEKIQEQKKKKKEEAKAKKEAKSRPRGAG. Over residues 353–389 the composition is skewed to basic and acidic residues; the sequence is ARTDEEKASLKRKHDEKIQEQKKKKKEEAKAKKEAKS.

The protein belongs to the XPG/RAD2 endonuclease family. FEN1 subfamily. As to quaternary structure, interacts with PCNA. Three molecules of fen1 bind to one PCNA trimer with each molecule binding to one PCNA monomer. PCNA stimulates the nuclease activity without altering cleavage specificity. Mg(2+) is required as a cofactor. Phosphorylated. Phosphorylation upon DNA damage induces relocalization to the nuclear plasma.

The protein resides in the nucleus. It is found in the nucleolus. It localises to the nucleoplasm. Its subcellular location is the mitochondrion. Its function is as follows. Structure-specific nuclease with 5'-flap endonuclease and 5'-3' exonuclease activities involved in DNA replication and repair. During DNA replication, cleaves the 5'-overhanging flap structure that is generated by displacement synthesis when DNA polymerase encounters the 5'-end of a downstream Okazaki fragment. It enters the flap from the 5'-end and then tracks to cleave the flap base, leaving a nick for ligation. Also involved in the long patch base excision repair (LP-BER) pathway, by cleaving within the apurinic/apyrimidinic (AP) site-terminated flap. Acts as a genome stabilization factor that prevents flaps from equilibrating into structures that lead to duplications and deletions. Also possesses 5'-3' exonuclease activity on nicked or gapped double-stranded DNA, and exhibits RNase H activity. Also involved in replication and repair of rDNA and in repairing mitochondrial DNA. This Aspergillus niger (strain ATCC MYA-4892 / CBS 513.88 / FGSC A1513) protein is Flap endonuclease 1 (fen1).